Consider the following 268-residue polypeptide: Glutamate racemase (268 aa).

Substrate is bound by residues 10–11 and 42–43; these read DS and YG. The active-site Proton donor/acceptor is the Cys73. Residue 74–75 participates in substrate binding; it reads NT. Cys184 functions as the Proton donor/acceptor in the catalytic mechanism. Residue 185-186 participates in substrate binding; sequence TH.

Belongs to the aspartate/glutamate racemases family.

The enzyme catalyses L-glutamate = D-glutamate. It functions in the pathway cell wall biogenesis; peptidoglycan biosynthesis. Provides the (R)-glutamate required for cell wall biosynthesis. This is Glutamate racemase from Carnobacterium sp. (strain St2).